The primary structure comprises 827 residues: Beta-galactosidase 2 (827 aa).

A signal peptide spans 1–24; that stretch reads MAASAVAVAFVVAVAAVLAAAASA. Residue glutamate 182 is the Proton donor of the active site. The N-linked (GlcNAc...) asparagine glycan is linked to asparagine 209. The active-site Nucleophile is glutamate 251. Asparagine 458 carries an N-linked (GlcNAc...) asparagine glycan. The SUEL-type lectin domain occupies 741-827; sequence DYEKAKVHLQ…KRAVVEAICG (87 aa).

Belongs to the glycosyl hydrolase 35 family.

The protein resides in the secreted. It is found in the extracellular space. Its subcellular location is the apoplast. The enzyme catalyses Hydrolysis of terminal non-reducing beta-D-galactose residues in beta-D-galactosides.. The protein is Beta-galactosidase 2 of Oryza sativa subsp. japonica (Rice).